Consider the following 197-residue polypeptide: Peptide deformylase (197 aa).

Fe cation is bound by residues cysteine 106 and histidine 148. Residue glutamate 149 is part of the active site. Histidine 152 lines the Fe cation pocket.

The protein belongs to the polypeptide deformylase family. Fe(2+) is required as a cofactor.

It catalyses the reaction N-terminal N-formyl-L-methionyl-[peptide] + H2O = N-terminal L-methionyl-[peptide] + formate. Its function is as follows. Removes the formyl group from the N-terminal Met of newly synthesized proteins. Requires at least a dipeptide for an efficient rate of reaction. N-terminal L-methionine is a prerequisite for activity but the enzyme has broad specificity at other positions. This is Peptide deformylase from Mycobacteroides abscessus (strain ATCC 19977 / DSM 44196 / CCUG 20993 / CIP 104536 / JCM 13569 / NCTC 13031 / TMC 1543 / L948) (Mycobacterium abscessus).